The sequence spans 365 residues: Holliday junction branch migration complex subunit RuvB (365 aa).

Over residues 1–10 (MAIVSSNAAS) the composition is skewed to polar residues. The tract at residues 1-48 (MAIVSSNAASQRPRPDRGPDRVPNRVVDGARQAEDDRDPGRVGAKEDS) is disordered. 2 stretches are compositionally biased toward basic and acidic residues: residues 13-23 (PRPDRGPDRVP) and 31-48 (RQAE…KEDS). A large ATPase domain (RuvB-L) region spans residues 13 to 210 (PRPDRGPDRV…FGLIQRLEFY (198 aa)). ATP-binding residues include L49, R50, G91, K94, T95, T96, R200, Y210, and R247. A Mg(2+)-binding site is contributed by T95. Positions 211–282 (GLEDLQAIVE…LVDEALTLHR (72 aa)) are small ATPAse domain (RuvB-S). Positions 285 to 365 (GRGLDASDRR…GWPYPQEQAA (81 aa)) are head domain (RuvB-H). DNA contacts are provided by R340 and R345.

Belongs to the RuvB family. As to quaternary structure, homohexamer. Forms an RuvA(8)-RuvB(12)-Holliday junction (HJ) complex. HJ DNA is sandwiched between 2 RuvA tetramers; dsDNA enters through RuvA and exits via RuvB. An RuvB hexamer assembles on each DNA strand where it exits the tetramer. Each RuvB hexamer is contacted by two RuvA subunits (via domain III) on 2 adjacent RuvB subunits; this complex drives branch migration. In the full resolvosome a probable DNA-RuvA(4)-RuvB(12)-RuvC(2) complex forms which resolves the HJ.

It is found in the cytoplasm. The catalysed reaction is ATP + H2O = ADP + phosphate + H(+). The RuvA-RuvB-RuvC complex processes Holliday junction (HJ) DNA during genetic recombination and DNA repair, while the RuvA-RuvB complex plays an important role in the rescue of blocked DNA replication forks via replication fork reversal (RFR). RuvA specifically binds to HJ cruciform DNA, conferring on it an open structure. The RuvB hexamer acts as an ATP-dependent pump, pulling dsDNA into and through the RuvAB complex. RuvB forms 2 homohexamers on either side of HJ DNA bound by 1 or 2 RuvA tetramers; 4 subunits per hexamer contact DNA at a time. Coordinated motions by a converter formed by DNA-disengaged RuvB subunits stimulates ATP hydrolysis and nucleotide exchange. Immobilization of the converter enables RuvB to convert the ATP-contained energy into a lever motion, pulling 2 nucleotides of DNA out of the RuvA tetramer per ATP hydrolyzed, thus driving DNA branch migration. The RuvB motors rotate together with the DNA substrate, which together with the progressing nucleotide cycle form the mechanistic basis for DNA recombination by continuous HJ branch migration. Branch migration allows RuvC to scan DNA until it finds its consensus sequence, where it cleaves and resolves cruciform DNA. The sequence is that of Holliday junction branch migration complex subunit RuvB from Synechococcus sp. (strain WH7803).